The sequence spans 138 residues: Putative membrane protein ORF6 (138 aa).

The next 2 membrane-spanning stretches (helical) occupy residues 4–20 and 37–53; these read LTII…HAVL and VVVL…LMTI.

The protein localises to the membrane. In Ictalurid herpesvirus 1 (strain Auburn) (IcHV-1), this protein is Putative membrane protein ORF6 (ORF6).